Consider the following 367-residue polypeptide: D-alanine--D-alanine ligase (367 aa).

The ATP-grasp domain maps to 141–346; it reads KNLFAQAGLR…YPELIERLIA (206 aa). ATP is bound at residue 174–229; it reads ERELGYPCFVKPANAGSSVGISKCKQRGDLKAAFIEAFQYDRKIIIEEAIVGREIE. The Mg(2+) site is built by Asp300, Glu313, and Asn315.

Belongs to the D-alanine--D-alanine ligase family. It depends on Mg(2+) as a cofactor. Mn(2+) is required as a cofactor.

It localises to the cytoplasm. The enzyme catalyses 2 D-alanine + ATP = D-alanyl-D-alanine + ADP + phosphate + H(+). The protein operates within cell wall biogenesis; peptidoglycan biosynthesis. Its function is as follows. Cell wall formation. The chain is D-alanine--D-alanine ligase from Geobacillus kaustophilus (strain HTA426).